A 2314-amino-acid polypeptide reads, in one-letter code: Protein Ycf2 (2314 aa).

ATP is bound at residue 1653–1660; that stretch reads GSIGTGRS.

It belongs to the Ycf2 family.

The protein localises to the plastid. It localises to the chloroplast stroma. Its function is as follows. Probable ATPase of unknown function. Its presence in a non-photosynthetic plant (Epifagus virginiana) and experiments in tobacco indicate that it has an essential function which is probably not related to photosynthesis. This Piper cenocladum (Ant piper) protein is Protein Ycf2.